The chain runs to 295 residues: Diaminopimelate epimerase (295 aa).

3 residues coordinate substrate: Asn-13, Gln-46, and Asn-66. The active-site Proton donor is the Cys-75. Residues 76–77 (GN), Asn-162, Asn-195, and 213–214 (ER) contribute to the substrate site. Cys-222 serves as the catalytic Proton acceptor. Residue 223 to 224 (GT) coordinates substrate.

Belongs to the diaminopimelate epimerase family. Homodimer.

Its subcellular location is the cytoplasm. The catalysed reaction is (2S,6S)-2,6-diaminopimelate = meso-2,6-diaminopimelate. Its pathway is amino-acid biosynthesis; L-lysine biosynthesis via DAP pathway; DL-2,6-diaminopimelate from LL-2,6-diaminopimelate: step 1/1. In terms of biological role, catalyzes the stereoinversion of LL-2,6-diaminopimelate (L,L-DAP) to meso-diaminopimelate (meso-DAP), a precursor of L-lysine and an essential component of the bacterial peptidoglycan. In Psychrobacter cryohalolentis (strain ATCC BAA-1226 / DSM 17306 / VKM B-2378 / K5), this protein is Diaminopimelate epimerase.